A 223-amino-acid polypeptide reads, in one-letter code: Small heat shock protein hspI, mitochondrial (223 aa).

A mitochondrion-targeting transit peptide spans methionine 1–glycine 23. The sHSP domain maps to lysine 109 to glutamine 223.

This sequence belongs to the small heat shock protein (HSP20) family.

The protein resides in the mitochondrion. The protein is Small heat shock protein hspI, mitochondrial (hspI) of Dictyostelium discoideum (Social amoeba).